The following is a 234-amino-acid chain: MIEVWPAIDLIDSTSVRLTEGDYETKEAMSRTAEEAIEFYSRYNCVTRIHVIDLIAAKQQTPLETNYIEQLVGLTQLPFEVGGGIRTLETIETYFDKGIQNVIIGTKGIQDPEWLKTVAEKYPGRIYISVDAYIDEIKVNGWLEDTGLNLFDYVQQIDSAPLGGIIYTDISKDGKLEGPNFELTAKLAASTKLPVIASGGIRSKEDLERLEKAGVAVAIVGKAANTQSFWEGLS.

The active-site Proton acceptor is the D9. D131 serves as the catalytic Proton donor.

It belongs to the HisA/HisF family.

The protein resides in the cytoplasm. The enzyme catalyses 1-(5-phospho-beta-D-ribosyl)-5-[(5-phospho-beta-D-ribosylamino)methylideneamino]imidazole-4-carboxamide = 5-[(5-phospho-1-deoxy-D-ribulos-1-ylimino)methylamino]-1-(5-phospho-beta-D-ribosyl)imidazole-4-carboxamide. Its pathway is amino-acid biosynthesis; L-histidine biosynthesis; L-histidine from 5-phospho-alpha-D-ribose 1-diphosphate: step 4/9. This is 1-(5-phosphoribosyl)-5-[(5-phosphoribosylamino)methylideneamino] imidazole-4-carboxamide isomerase from Staphylococcus carnosus (strain TM300).